The sequence spans 84 residues: Exodeoxyribonuclease 7 small subunit (84 aa).

This sequence belongs to the XseB family. As to quaternary structure, heterooligomer composed of large and small subunits.

Its subcellular location is the cytoplasm. The catalysed reaction is Exonucleolytic cleavage in either 5'- to 3'- or 3'- to 5'-direction to yield nucleoside 5'-phosphates.. Its function is as follows. Bidirectionally degrades single-stranded DNA into large acid-insoluble oligonucleotides, which are then degraded further into small acid-soluble oligonucleotides. This is Exodeoxyribonuclease 7 small subunit from Bartonella quintana (strain Toulouse) (Rochalimaea quintana).